Reading from the N-terminus, the 208-residue chain is Thymidylate kinase (208 aa).

11–18 (GGEGAGKS) contributes to the ATP binding site.

It belongs to the thymidylate kinase family.

It carries out the reaction dTMP + ATP = dTDP + ADP. Its function is as follows. Phosphorylation of dTMP to form dTDP in both de novo and salvage pathways of dTTP synthesis. The polypeptide is Thymidylate kinase (tmk) (Caulobacter vibrioides (strain ATCC 19089 / CIP 103742 / CB 15) (Caulobacter crescentus)).